Consider the following 67-residue polypeptide: Large ribosomal subunit protein eL24 (67 aa).

The Zn(2+) site is built by cysteine 7, cysteine 10, cysteine 33, and cysteine 37. The segment at 7–37 (CSYCGKPFEPGTGKMFVRNDGRVLFFCSRKC) adopts a C4-type zinc-finger fold.

This sequence belongs to the eukaryotic ribosomal protein eL24 family. As to quaternary structure, part of the 50S ribosomal subunit. Forms a cluster with proteins L3 and L14. Requires Zn(2+) as cofactor.

Functionally, binds to the 23S rRNA. This Pyrococcus abyssi (strain GE5 / Orsay) protein is Large ribosomal subunit protein eL24.